Reading from the N-terminus, the 271-residue chain is Probable redox regulatory protein SCO3349 (271 aa).

2 disordered regions span residues 1-21 (MPKT…KHIA) and 109-130 (AEGT…TRPF). The segment covering 7–21 (AKDEKSAKKDKKHIA) has biased composition (basic and acidic residues).

Belongs to the Rv0495c family.

Essential for maintaining intracellular redox homeostasis. In Streptomyces coelicolor (strain ATCC BAA-471 / A3(2) / M145), this protein is Probable redox regulatory protein SCO3349.